The primary structure comprises 245 residues: tRNA pseudouridine synthase A (245 aa).

Residue aspartate 52 is the Nucleophile of the active site. Tyrosine 111 serves as a coordination point for substrate.

This sequence belongs to the tRNA pseudouridine synthase TruA family. As to quaternary structure, homodimer.

It carries out the reaction uridine(38/39/40) in tRNA = pseudouridine(38/39/40) in tRNA. Functionally, formation of pseudouridine at positions 38, 39 and 40 in the anticodon stem and loop of transfer RNAs. The sequence is that of tRNA pseudouridine synthase A from Rickettsia bellii (strain RML369-C).